The following is a 161-amino-acid chain: Small ribosomal subunit protein uS9 (161 aa).

Belongs to the universal ribosomal protein uS9 family.

This is Small ribosomal subunit protein uS9 from Bartonella henselae (strain ATCC 49882 / DSM 28221 / CCUG 30454 / Houston 1) (Rochalimaea henselae).